The chain runs to 341 residues: Uroporphyrinogen decarboxylase (341 aa).

Residues 23–27 (RQAGR), Asp-73, Tyr-148, Ser-203, and His-318 each bind substrate.

Belongs to the uroporphyrinogen decarboxylase family. As to quaternary structure, homodimer.

The protein localises to the cytoplasm. The catalysed reaction is uroporphyrinogen III + 4 H(+) = coproporphyrinogen III + 4 CO2. The protein operates within porphyrin-containing compound metabolism; protoporphyrin-IX biosynthesis; coproporphyrinogen-III from 5-aminolevulinate: step 4/4. Its function is as follows. Catalyzes the decarboxylation of four acetate groups of uroporphyrinogen-III to yield coproporphyrinogen-III. This is Uroporphyrinogen decarboxylase from Brucella anthropi (strain ATCC 49188 / DSM 6882 / CCUG 24695 / JCM 21032 / LMG 3331 / NBRC 15819 / NCTC 12168 / Alc 37) (Ochrobactrum anthropi).